The primary structure comprises 228 residues: Small ribosomal subunit protein uS7m (228 aa).

The transit peptide at 1-33 (MAASVRHLLKPWTPSLCLMRWSRYNPYYLDPEP) directs the protein to the mitochondrion.

This sequence belongs to the universal ribosomal protein uS7 family. In terms of assembly, component of the mitochondrial ribosome small subunit (28S) which comprises a 12S rRNA and about 30 distinct proteins.

Its subcellular location is the mitochondrion. The chain is Small ribosomal subunit protein uS7m (mrps7) from Danio rerio (Zebrafish).